A 415-amino-acid chain; its full sequence is Putative F-box/FBD/LRR-repeat protein At3g49040 (415 aa).

The 49-residue stretch at 10–58 (EDRISELHEALLVHIMSSLPTKTVVATSVLSKRWRHVWKTVQNLKFVSK) folds into the F-box domain. 5 LRR repeats span residues 60 to 86 (HQTF…DLEF), 87 to 114 (SNQL…VLDL), 143 to 170 (TLTL…HLYK), 171 to 196 (VHFY…IVHR), and 213 to 241 (RLTI…NIRR). Residues 272–377 (ILESLTSAKR…TSLKKATFST (106 aa)) enclose the FBD domain.

This chain is Putative F-box/FBD/LRR-repeat protein At3g49040, found in Arabidopsis thaliana (Mouse-ear cress).